The chain runs to 152 residues: MARIHARRRGKSGSKRIYRDSPPEWVDMSPEEVEKKVLELYNEGYEPSMIGMILRDRYGIPSVKQVTGKKIQKILKEHGVEIKYPEDLKALIKKALKLRAHLEVHRKDKHNRRGLQLIEAKIWRLSSYYKEKGVLPADWKYNPDRLKIEISK.

The span at 1–16 (MARIHARRRGKSGSKR) shows a compositional bias: basic residues. The segment at 1–21 (MARIHARRRGKSGSKRIYRDS) is disordered.

The protein belongs to the universal ribosomal protein uS15 family. Part of the 30S ribosomal subunit.

This Archaeoglobus fulgidus (strain ATCC 49558 / DSM 4304 / JCM 9628 / NBRC 100126 / VC-16) protein is Small ribosomal subunit protein uS15.